The following is a 406-amino-acid chain: Arginine decarboxylase (406 aa).

Residue Lys-8 is modified to N6-(pyridoxal phosphate)lysine. A substrate-binding site is contributed by Val-192–Tyr-202.

This sequence belongs to the Orn/Lys/Arg decarboxylase class-II family. SpeA subfamily. The cofactor is pyridoxal 5'-phosphate. Requires Mg(2+) as cofactor.

The enzyme catalyses L-arginine + H(+) = agmatine + CO2. Its pathway is amine and polyamine biosynthesis; agmatine biosynthesis; agmatine from L-arginine: step 1/1. In Theobroma cacao (Cacao), this protein is Arginine decarboxylase (SPE2).